We begin with the raw amino-acid sequence, 120 residues long: MAAKIKKGDLVQVITGAKAERGGDRGKQGKVLRVFTDTNRVLVEGINRVTKHTRVGQSQRGTKTGGIEVVEAPIHISNVALVDPSTKKPTRVGFRLDTVEKNGVKKTVRIRVSKSSGKDI.

It belongs to the universal ribosomal protein uL24 family. Part of the 50S ribosomal subunit.

Its function is as follows. One of two assembly initiator proteins, it binds directly to the 5'-end of the 23S rRNA, where it nucleates assembly of the 50S subunit. Functionally, one of the proteins that surrounds the polypeptide exit tunnel on the outside of the subunit. The chain is Large ribosomal subunit protein uL24 from Pseudarthrobacter chlorophenolicus (strain ATCC 700700 / DSM 12829 / CIP 107037 / JCM 12360 / KCTC 9906 / NCIMB 13794 / A6) (Arthrobacter chlorophenolicus).